The following is a 291-amino-acid chain: Citrate lyase subunit beta (291 aa).

Positions 66 and 129 each coordinate substrate. Mg(2+) contacts are provided by Glu-129 and Asp-156.

It belongs to the HpcH/HpaI aldolase family. Citrate lyase beta subunit subfamily. As to quaternary structure, oligomer with a subunit composition of (alpha,beta,gamma)6. Mg(2+) is required as a cofactor.

Its subcellular location is the cytoplasm. It carries out the reaction citrate = oxaloacetate + acetate. It catalyses the reaction (3S)-citryl-CoA = oxaloacetate + acetyl-CoA. Represents a citryl-ACP lyase. The chain is Citrate lyase subunit beta (citE) from Haemophilus influenzae (strain ATCC 51907 / DSM 11121 / KW20 / Rd).